The primary structure comprises 244 residues: 1-(5-phosphoribosyl)-5-[(5-phosphoribosylamino)methylideneamino] imidazole-4-carboxamide isomerase (244 aa).

Asp10 serves as the catalytic Proton acceptor. Residue Asp132 is the Proton donor of the active site.

It belongs to the HisA/HisF family.

The protein localises to the cytoplasm. It catalyses the reaction 1-(5-phospho-beta-D-ribosyl)-5-[(5-phospho-beta-D-ribosylamino)methylideneamino]imidazole-4-carboxamide = 5-[(5-phospho-1-deoxy-D-ribulos-1-ylimino)methylamino]-1-(5-phospho-beta-D-ribosyl)imidazole-4-carboxamide. Its pathway is amino-acid biosynthesis; L-histidine biosynthesis; L-histidine from 5-phospho-alpha-D-ribose 1-diphosphate: step 4/9. In Stenotrophomonas maltophilia (strain R551-3), this protein is 1-(5-phosphoribosyl)-5-[(5-phosphoribosylamino)methylideneamino] imidazole-4-carboxamide isomerase.